Reading from the N-terminus, the 115-residue chain is MPMFIVNTNVPRSSVPEGLLSELTQQLAQATGKPAQYIAVHVVPDQLMTFSGSSDPCALCSLHSIGKIGGAQNRTYSKLLCGLLADRLRISPDRIYINYYDMNAANVGWNGSTFA.

Proline 2 functions as the Proton acceptor; via imino nitrogen in the catalytic mechanism. Residues lysine 33 and isoleucine 65 each contribute to the substrate site. Lysine 78 carries the post-translational modification N6-acetyllysine; alternate. Lysine 78 carries the post-translational modification N6-succinyllysine; alternate. Asparagine 98 is a substrate binding site.

The protein belongs to the MIF family. As to quaternary structure, homotrimer. Interacts with CXCR2 extracellular domain. Interacts with the CD74 extracellular domain, USO1, COPS5 and BNIPL.

The protein resides in the secreted. It is found in the cytoplasm. The enzyme catalyses 3-phenylpyruvate = enol-phenylpyruvate. The catalysed reaction is L-dopachrome = 5,6-dihydroxyindole-2-carboxylate. Its function is as follows. Pro-inflammatory cytokine involved in the innate immune response to bacterial pathogens. The expression of MIF at sites of inflammation suggests a role as mediator in regulating the function of macrophages in host defense. Counteracts the anti-inflammatory activity of glucocorticoids. Has phenylpyruvate tautomerase and dopachrome tautomerase activity (in vitro), but the physiological substrate is not known. It is not clear whether the tautomerase activity has any physiological relevance, and whether it is important for cytokine activity. This is Macrophage migration inhibitory factor (MIF) from Meriones unguiculatus (Mongolian jird).